The following is a 427-amino-acid chain: 3-phosphoshikimate 1-carboxyvinyltransferase (427 aa).

The 3-phosphoshikimate site is built by lysine 22, serine 23, and arginine 27. Residue lysine 22 participates in phosphoenolpyruvate binding. Residues glycine 96 and arginine 124 each coordinate phosphoenolpyruvate. The 3-phosphoshikimate site is built by serine 169, serine 170, glutamine 171, serine 197, aspartate 313, asparagine 336, and lysine 340. Phosphoenolpyruvate is bound at residue glutamine 171. Residue aspartate 313 is the Proton acceptor of the active site. 3 residues coordinate phosphoenolpyruvate: arginine 344, arginine 386, and lysine 411.

Belongs to the EPSP synthase family. In terms of assembly, monomer.

Its subcellular location is the cytoplasm. It carries out the reaction 3-phosphoshikimate + phosphoenolpyruvate = 5-O-(1-carboxyvinyl)-3-phosphoshikimate + phosphate. The protein operates within metabolic intermediate biosynthesis; chorismate biosynthesis; chorismate from D-erythrose 4-phosphate and phosphoenolpyruvate: step 6/7. In terms of biological role, catalyzes the transfer of the enolpyruvyl moiety of phosphoenolpyruvate (PEP) to the 5-hydroxyl of shikimate-3-phosphate (S3P) to produce enolpyruvyl shikimate-3-phosphate and inorganic phosphate. In Shigella sonnei, this protein is 3-phosphoshikimate 1-carboxyvinyltransferase.